The sequence spans 89 residues: Small ribosomal subunit protein uS17 (89 aa).

This sequence belongs to the universal ribosomal protein uS17 family. Part of the 30S ribosomal subunit.

In terms of biological role, one of the primary rRNA binding proteins, it binds specifically to the 5'-end of 16S ribosomal RNA. The polypeptide is Small ribosomal subunit protein uS17 (Bacteroides fragilis (strain ATCC 25285 / DSM 2151 / CCUG 4856 / JCM 11019 / LMG 10263 / NCTC 9343 / Onslow / VPI 2553 / EN-2)).